Here is a 227-residue protein sequence, read N- to C-terminus: Cytochrome c oxidase subunit 2 (227 aa).

Over 1 to 14 the chain is Mitochondrial intermembrane; that stretch reads MAYPYELGFQDASS. A helical transmembrane segment spans residues 15–45; that stretch reads PIMEELLHFHDHTLMIVFLISTLVLYLITIM. Residues 46–59 are Mitochondrial matrix-facing; it reads LTTKLTHTSTMDAQ. Residues 60–87 form a helical membrane-spanning segment; the sequence is EIETIWTILPAIILILIALPSLRILYMM. Topologically, residues 88–227 are mitochondrial intermembrane; the sequence is DEINSPSLTV…DFEIWSSSML (140 aa). His161, Cys196, Glu198, Cys200, His204, and Met207 together coordinate Cu cation. Glu198 is a binding site for Mg(2+).

Belongs to the cytochrome c oxidase subunit 2 family. Component of the cytochrome c oxidase (complex IV, CIV), a multisubunit enzyme composed of 14 subunits. The complex is composed of a catalytic core of 3 subunits MT-CO1, MT-CO2 and MT-CO3, encoded in the mitochondrial DNA, and 11 supernumerary subunits COX4I, COX5A, COX5B, COX6A, COX6B, COX6C, COX7A, COX7B, COX7C, COX8 and NDUFA4, which are encoded in the nuclear genome. The complex exists as a monomer or a dimer and forms supercomplexes (SCs) in the inner mitochondrial membrane with NADH-ubiquinone oxidoreductase (complex I, CI) and ubiquinol-cytochrome c oxidoreductase (cytochrome b-c1 complex, complex III, CIII), resulting in different assemblies (supercomplex SCI(1)III(2)IV(1) and megacomplex MCI(2)III(2)IV(2)). Found in a complex with TMEM177, COA6, COX18, COX20, SCO1 and SCO2. Interacts with TMEM177 in a COX20-dependent manner. Interacts with COX20. Interacts with COX16. Requires Cu cation as cofactor.

It localises to the mitochondrion inner membrane. It catalyses the reaction 4 Fe(II)-[cytochrome c] + O2 + 8 H(+)(in) = 4 Fe(III)-[cytochrome c] + 2 H2O + 4 H(+)(out). Component of the cytochrome c oxidase, the last enzyme in the mitochondrial electron transport chain which drives oxidative phosphorylation. The respiratory chain contains 3 multisubunit complexes succinate dehydrogenase (complex II, CII), ubiquinol-cytochrome c oxidoreductase (cytochrome b-c1 complex, complex III, CIII) and cytochrome c oxidase (complex IV, CIV), that cooperate to transfer electrons derived from NADH and succinate to molecular oxygen, creating an electrochemical gradient over the inner membrane that drives transmembrane transport and the ATP synthase. Cytochrome c oxidase is the component of the respiratory chain that catalyzes the reduction of oxygen to water. Electrons originating from reduced cytochrome c in the intermembrane space (IMS) are transferred via the dinuclear copper A center (CU(A)) of subunit 2 and heme A of subunit 1 to the active site in subunit 1, a binuclear center (BNC) formed by heme A3 and copper B (CU(B)). The BNC reduces molecular oxygen to 2 water molecules using 4 electrons from cytochrome c in the IMS and 4 protons from the mitochondrial matrix. The polypeptide is Cytochrome c oxidase subunit 2 (MT-CO2) (Cavia aperea (Brazilian guinea pig)).